Here is a 291-residue protein sequence, read N- to C-terminus: Ribosomal RNA small subunit methyltransferase H (291 aa).

Residues glycine 25–histidine 27, aspartate 45, phenylalanine 73, aspartate 88, and glutamine 95 contribute to the S-adenosyl-L-methionine site.

The protein belongs to the methyltransferase superfamily. RsmH family.

The protein resides in the cytoplasm. It carries out the reaction cytidine(1402) in 16S rRNA + S-adenosyl-L-methionine = N(4)-methylcytidine(1402) in 16S rRNA + S-adenosyl-L-homocysteine + H(+). Its function is as follows. Specifically methylates the N4 position of cytidine in position 1402 (C1402) of 16S rRNA. The polypeptide is Ribosomal RNA small subunit methyltransferase H (Flavobacterium psychrophilum (strain ATCC 49511 / DSM 21280 / CIP 103535 / JIP02/86)).